A 515-amino-acid chain; its full sequence is Ecdysteroid UDP-glucosyltransferase (515 aa).

Positions 1-31 (MKMIILVVSLHVLRNSAAVRVLCMFPTPSYS) are cleaved as a signal peptide.

Belongs to the UDP-glycosyltransferase family.

In terms of biological role, catalyzes the transfer of glucose from UDP-glucose to ecdysteroids which are insect molting hormones. Expression of egt interferes with normal insect development and block molting. The protein is Ecdysteroid UDP-glucosyltransferase (EGT) of Spodoptera littoralis nuclear polyhedrosis virus (SlNPV).